An 852-amino-acid polypeptide reads, in one-letter code: Kinesin-like protein KIF18B (852 aa).

The region spanning 7–351 is the Kinesin motor domain; sequence TLQVVVRVRP…LKYADRAKEI (345 aa). Position 109–116 (109–116) interacts with ATP; that stretch reads GATGAGKT. Positions 366–393 form a coiled coil; sequence ISQYATICQQLQAEVAALRKKLQVYEGG. Disordered regions lie at residues 390–424 and 437–485; these read YEGG…PAGP and QVER…RLTL. Position 404 is a phosphoserine (S404). T417 bears the Phosphothreonine mark. Acidic residues predominate over residues 451 to 461; that stretch reads QSPEDEDEGPA. Phosphoserine occurs at positions 452, 480, and 558. Disordered stretches follow at residues 575 to 594 and 602 to 689; these read IPVP…PVTR and GPLH…SPRV. Residues 577-588 show a composition bias toward pro residues; sequence VPSPLCPEPPGY. The Nuclear localization signal motif lies at 624–632; sequence PMEKKRRRP. S633 and S639 each carry phosphoserine. The MAPRE1-binding signature appears at 653-656; the sequence is SFLP. S662 carries the post-translational modification Phosphoserine. The span at 664-673 shows a compositional bias: polar residues; the sequence is PDTQPSQGPS. A Phosphothreonine modification is found at T674. Residues 711–736 are KIF2C-binding; the sequence is TPLALPTRDLNATFDLSEEPPSKPSF. Positions 767 to 798 are disordered; the sequence is MKGPKPTSSLPGTSACKKKRVASSSVSHGRSR. 2 consecutive short sequence motifs (MAPRE1-binding) follow at residues 774–777 and 800–803; these read SSLP and ARLP. The residue at position 822 (S822) is a Phosphoserine.

Belongs to the TRAFAC class myosin-kinesin ATPase superfamily. Kinesin family. In terms of assembly, interacts with MAPRE1; this interaction is required for efficient accumulation at microtubule plus ends. Interacts with KIF2C at microtubule tips; this interaction increases the affinity of both partners for microtubule plus ends and is required for robust microtubule depolymerization. KIF2C phosphorylation by AURKA or AURKB strongly reduces KIF18B-binding. In terms of tissue distribution, shows a prominent expression in the amygdala.

Its subcellular location is the nucleus. It localises to the cytoplasm. The protein resides in the cytoskeleton. Its function is as follows. In complex with KIF2C, constitutes the major microtubule plus-end depolymerizing activity in mitotic cells. Its major role may be to transport KIF2C and/or MAPRE1 along microtubules. The polypeptide is Kinesin-like protein KIF18B (KIF18B) (Homo sapiens (Human)).